The primary structure comprises 435 residues: Adenylosuccinate synthetase (435 aa).

GTP is bound by residues 12-18 (GDEGKGK) and 40-42 (GHT). Aspartate 13 (proton acceptor) is an active-site residue. Mg(2+) contacts are provided by aspartate 13 and glycine 40. IMP contacts are provided by residues 13–16 (DEGK), 38–41 (NAGH), threonine 130, arginine 144, glutamine 224, threonine 239, and arginine 301. Catalysis depends on histidine 41, which acts as the Proton donor. 297–303 (TVSNRKR) is a binding site for substrate. Residues arginine 303, 329-331 (KLD), and 411-413 (SAG) each bind GTP.

The protein belongs to the adenylosuccinate synthetase family. As to quaternary structure, homodimer. It depends on Mg(2+) as a cofactor.

The protein localises to the cytoplasm. The enzyme catalyses IMP + L-aspartate + GTP = N(6)-(1,2-dicarboxyethyl)-AMP + GDP + phosphate + 2 H(+). It participates in purine metabolism; AMP biosynthesis via de novo pathway; AMP from IMP: step 1/2. Its function is as follows. Plays an important role in the de novo pathway of purine nucleotide biosynthesis. Catalyzes the first committed step in the biosynthesis of AMP from IMP. The chain is Adenylosuccinate synthetase from Wolbachia sp. subsp. Brugia malayi (strain TRS).